We begin with the raw amino-acid sequence, 580 residues long: mRNA-decapping enzyme 1A (580 aa).

The residue at position 62 (serine 62) is a Phosphoserine. Basic and acidic residues predominate over residues 132 to 141; it reads RSQQAARDKQ. 3 disordered regions span residues 132–154, 172–209, and 245–276; these read RSQQ…DHRP, QMGD…QDKS, and LPGD…NMGI. 3 positions are modified to phosphoserine: serine 142, serine 179, and serine 180. Residues 173-196 show a composition bias toward polar residues; that stretch reads MGDSNISSPGLQPSTQISNLGSTE. The segment covering 253–264 has biased composition (low complexity); the sequence is EPSSFLPFSFEP. Residues serine 319 and serine 334 each carry the phosphoserine modification. Positions 343 to 359 are enriched in polar residues; sequence QAVKTTPRQRSPLSSQP. Residues 343 to 371 are disordered; that stretch reads QAVKTTPRQRSPLSSQPVPELSQASLAAS. Phosphothreonine is present on threonine 348. Position 353 is a phosphoserine (serine 353). Arginine 376 carries the post-translational modification Asymmetric dimethylarginine. The residue at position 401 (threonine 401) is a Phosphothreonine. Residues serine 422, serine 520, serine 521, and serine 523 each carry the phosphoserine modification. The interval 510–533 is disordered; sequence TRSSDLERKASSPSPLTVGTSENQ. Residues 520-531 are compositionally biased toward polar residues; sequence SSPSPLTVGTSE. A phosphothreonine mark is found at threonine 526 and threonine 529.

The protein belongs to the DCP1 family. As to quaternary structure, forms a complex with EDC3, DCP2, DDX6 and EDC4/HEDLS, within this complex directly interacts with EDC3. Part of a cytoplasmic complex containing proteins involved in mRNA decay, including XRN1 and LSM1. Interacts with DCP1B. Interacts with DCP2. Interacts with DDX17 in an RNA-independent manner. Interacts with PNRC2. Interacts with SMAD4. Interacts with UPF1. Interacts with ZC3HAV1. Interacts with ZFP36L1. Interacts with NBDY. Interacts with DHX34; the interaction is RNA-independent. Post-translationally, (Microbial infection) Cleaved by porcine reproductive and respiratory syndrome virus serine protease nsp4 after Glu-238. The cleavage inhibits DCP1A function.

It is found in the cytoplasm. Its subcellular location is the P-body. It localises to the nucleus. The enzyme catalyses a 5'-end (N(7)-methyl 5'-triphosphoguanosine)-ribonucleoside in mRNA + H2O = N(7)-methyl-GDP + a 5'-end phospho-ribonucleoside in mRNA + 2 H(+). In terms of biological role, necessary for the degradation of mRNAs, both in normal mRNA turnover and in nonsense-mediated mRNA decay. Removes the 7-methyl guanine cap structure from mRNA molecules, yielding a 5'-phosphorylated mRNA fragment and 7m-GDP. Contributes to the transactivation of target genes after stimulation by TGFB1. Essential for embryonic development. The chain is mRNA-decapping enzyme 1A (DCP1A) from Sus scrofa (Pig).